We begin with the raw amino-acid sequence, 1106 residues long: Voltage-dependent calcium channel subunit alpha-2/delta-1 (1106 aa).

The N-terminal stretch at methionine 1–glutamate 26 is a signal peptide. The Extracellular portion of the chain corresponds to glutamate 27–glycine 1076. Asparagine 94 is a glycosylation site (N-linked (GlcNAc...) asparagine). Position 121 is a phosphoserine (serine 121). N-linked (GlcNAc...) asparagine glycosylation is found at asparagine 138 and asparagine 186. In terms of domain architecture, VWFA spans aspartate 255 to leucine 432. A divalent metal cation contacts are provided by aspartate 261, serine 263, and serine 265. The MIDAS-like motif motif lies at aspartate 261–serine 265. 2 N-linked (GlcNAc...) asparagine glycosylation sites follow: asparagine 326 and asparagine 350. Cysteine 406 and cysteine 1062 are disulfide-bonded. Residues tryptophan 448–proline 539 enclose the Cache domain. Asparagine 615, asparagine 784, and asparagine 891 each carry an N-linked (GlcNAc...) asparagine glycan. The helical transmembrane segment at valine 1077–leucine 1097 threads the bilayer. Residues valine 1098 to leucine 1106 are Cytoplasmic-facing.

It belongs to the calcium channel subunit alpha-2/delta family. As to quaternary structure, dimer formed of alpha-2-1 and delta-1 chains; disulfide-linked. Voltage-dependent calcium channels are multisubunit complexes, consisting of alpha-1 (CACNA1), alpha-2 (CACNA2D), beta (CACNB) and delta (CACNA2D) subunits in a 1:1:1:1 ratio. Post-translationally, proteolytically processed into subunits alpha-2-1 and delta-1 that are disulfide-linked. In terms of tissue distribution, skeletal muscle.

Its subcellular location is the membrane. It is found in the cell membrane. In terms of biological role, the alpha-2/delta subunit of voltage-dependent calcium channels regulates calcium current density and activation/inactivation kinetics of the calcium channel. Plays an important role in excitation-contraction coupling. This is Voltage-dependent calcium channel subunit alpha-2/delta-1 (CACNA2D1) from Oryctolagus cuniculus (Rabbit).